A 394-amino-acid chain; its full sequence is Muscle cell intermediate filament protein AV71 (394 aa).

Positions 1 to 73 are coil 1B; sequence AEINLVRRRV…RVHDQEITEL (73 aa). One can recognise an IF rod domain in the interval 1 to 239; that stretch reads AEINLVRRRV…KMLEGEENRA (239 aa). The segment at 74-91 is linker 12; that stretch reads QAMAARDTTPENREYFKN. The coil 2 stretch occupies residues 92–239; the sequence is ELSSAIRDIR…KMLEGEENRA (148 aa). The tract at residues 240–394 is tail; the sequence is GLRQLVEQVV…HIQRSSHTIN (155 aa). The LTD domain occupies 272 to 389; sequence SRTSFQRSAK…EERASHIQRS (118 aa).

It belongs to the intermediate filament family.

The protein is Muscle cell intermediate filament protein AV71 (AV71) of Acanthocheilonema viteae (Filarial nematode worm).